Here is a 79-residue protein sequence, read N- to C-terminus: Sulfur carrier protein TusA (79 aa).

Cys17 (cysteine persulfide intermediate) is an active-site residue.

Belongs to the sulfur carrier protein TusA family.

It is found in the cytoplasm. Functionally, sulfur carrier protein which probably makes part of a sulfur-relay system. The sequence is that of Sulfur carrier protein TusA from Pseudoalteromonas translucida (strain TAC 125).